Here is a 96-residue protein sequence, read N- to C-terminus: Molybdopterin synthase sulfur carrier subunit (96 aa).

The residue at position 96 (G96) is a 1-thioglycine; alternate. At G96 the chain carries Glycyl adenylate; alternate.

This sequence belongs to the MoaD family. MOCS2A subfamily. In terms of assembly, heterotetramer; composed of 2 small (MOCS2A) and 2 large (MOCS2B) subunits. C-terminal thiocarboxylation occurs in 2 steps, it is first acyl-adenylated (-COAMP) via the hesA/moeB/thiF part of MOCS3, then thiocarboxylated (-COSH) via the rhodanese domain of MOCS3.

The protein resides in the cytoplasm. The protein operates within cofactor biosynthesis; molybdopterin biosynthesis. Its function is as follows. Acts as a sulfur carrier required for molybdopterin biosynthesis. Component of the molybdopterin synthase complex that catalyzes the conversion of precursor Z into molybdopterin by mediating the incorporation of 2 sulfur atoms into precursor Z to generate a dithiolene group. In the complex, serves as sulfur donor by being thiocarboxylated (-COSH) at its C-terminus by MOCS3. After interaction with MOCS2B, the sulfur is then transferred to precursor Z to form molybdopterin. This Arabidopsis thaliana (Mouse-ear cress) protein is Molybdopterin synthase sulfur carrier subunit.